Reading from the N-terminus, the 289-residue chain is Bifunctional protein FolD (289 aa).

NADP(+) contacts are provided by residues 165 to 167 and Ser190; that span reads GAS.

Belongs to the tetrahydrofolate dehydrogenase/cyclohydrolase family. In terms of assembly, homodimer.

The catalysed reaction is (6R)-5,10-methylene-5,6,7,8-tetrahydrofolate + NADP(+) = (6R)-5,10-methenyltetrahydrofolate + NADPH. The enzyme catalyses (6R)-5,10-methenyltetrahydrofolate + H2O = (6R)-10-formyltetrahydrofolate + H(+). Its pathway is one-carbon metabolism; tetrahydrofolate interconversion. In terms of biological role, catalyzes the oxidation of 5,10-methylenetetrahydrofolate to 5,10-methenyltetrahydrofolate and then the hydrolysis of 5,10-methenyltetrahydrofolate to 10-formyltetrahydrofolate. In Ralstonia nicotianae (strain ATCC BAA-1114 / GMI1000) (Ralstonia solanacearum), this protein is Bifunctional protein FolD.